A 76-amino-acid polypeptide reads, in one-letter code: Sec-independent protein translocase protein TatA (76 aa).

A helical transmembrane segment spans residues 1–21 (MGGISIWQLLIIALIVVLLFG). Residues 43 to 76 (MSSEDEKKAIEDTSAEKTAQTEEKKTESKDKEQA) form a disordered region. The segment covering 46 to 76 (EDEKKAIEDTSAEKTAQTEEKKTESKDKEQA) has biased composition (basic and acidic residues).

Belongs to the TatA/E family. The Tat system comprises two distinct complexes: a TatABC complex, containing multiple copies of TatA, TatB and TatC subunits, and a separate TatA complex, containing only TatA subunits. Substrates initially bind to the TatABC complex, which probably triggers association of the separate TatA complex to form the active translocon.

The protein resides in the cell inner membrane. Functionally, part of the twin-arginine translocation (Tat) system that transports large folded proteins containing a characteristic twin-arginine motif in their signal peptide across membranes. TatA could form the protein-conducting channel of the Tat system. In Shewanella loihica (strain ATCC BAA-1088 / PV-4), this protein is Sec-independent protein translocase protein TatA.